The primary structure comprises 69 residues: Amphipathic peptide Hp1404 (69 aa).

The N-terminal stretch at 1–23 (MKTQFAILMITVVLMQMLVQTEG) is a signal peptide. F37 bears the Phenylalanine amide mark. A propeptide spanning residues 41–69 (GLKNLDQLDDSFDSDLSDADVKLLREMFK) is cleaved from the precursor.

The protein belongs to the non-disulfide-bridged peptide (NDBP) superfamily. Short antimicrobial peptide (group 4) family. Expressed by the venom gland.

The protein localises to the secreted. The protein resides in the target cell membrane. Antibacterial activity is decreased by serum. In terms of biological role, antimicrobial peptide that acts by inducing concentration-dependent membrane disruption, implying a membrane-lytic mode of action. Acts with potent activity against Gram-positive bacteria (MIC=4.04-16.16 uM) including methicillin-resistant S.aureus (MRSA). Its activity on Gram-negative bacteria is controversial. Li and colleagues (2014) describe no activity towards E.coli and P.aeruginosa, while Kim and colleagues (2018) describe a potent activity towards P.aeruginosa (MIC=3.13-12.5 uM), and Luo and colleagues (2021) describe a potent activity against antibiotic-sensitive and -resistant Acinetobacter baumannii strains (MIC=3.2-10 uM). On S.aureus, possibly acts by impairing an unknown intracellular target and/or by interacting with the membrane, leading to the lateral expansion of the membrane area at high MIC concentrations, resulting in the formation of mesosome-like structures that leads to cell lysis. Shows moderate inhibition of P.aeruginosa biofilm formation. Administration of this peptide at sub-MIC concentrations in multiple treatments does not lead to resistance in S.aureus. Exhibits low toxicity and hemolytic activity against mammalian cell lines and BALB/c mice. In vivo, improves the survival rate of the MRSA infected BALB/c mice in the peritonitis model. The protein is Amphipathic peptide Hp1404 of Heterometrus petersii (Asian forest scorpion).